Here is a 295-residue protein sequence, read N- to C-terminus: MRLIIVSGFSGSGKSIALDTLEDCGYYCIDNLPAPLIEPFLQQAIASRSSAFDKIAIGIDARNQSANLTGFPDILGRARQLGVDCRILFLQAEPETLLKRFSETRRKHPLTDASVPLAEAIELERHLLEPVLSRADLHIDTTYTTIHQLRELVRQRVGIPSGGLMSLCLQSFGFKHGVPMDTDFVFDARCLPNPHWTASLRPKTGKDPEVVAFLAESADVHDYLNHLTAFLERWIPCFLAENRSYLNVSIGCTGGQHRSVYLVEALAGRLNSDRYNLLVRHRELPEPAEESHGTK.

8–15 (GFSGSGKS) provides a ligand contact to ATP. A GTP-binding site is contributed by 60–63 (DARN).

It belongs to the RapZ-like family.

Its function is as follows. Displays ATPase and GTPase activities. The polypeptide is Nucleotide-binding protein MCA0739 (Methylococcus capsulatus (strain ATCC 33009 / NCIMB 11132 / Bath)).